The sequence spans 995 residues: MFIHRMKSNLASLFLSFFLLLACEFTFSYADFSTTTSDATHPSATATEDIFSTPAVPSLGLAQNPSVYEPYRGDKCGGYNAIQVSEYEKGVLAILQLNGDPCYAYGTDYPFLALNVSFDSIDRLHVSIQDLYGAQFQFSKRTDVWDAPLYHFQPQFGDRTYNFSFNSQPFEFWVTRVSDGEVLFDTRGHKLIFEDQYIELTTNMVDDYNVYGLAETVHGLRLGNNLTRTFWANGNPTPLDRNAYGTHPFYLEHRYTPSENLNSDGQPSYTSSTHGVLMLTANGMEVLLRPNYLQYRIIGGIVDLYIYVGGTKNPKDTVSQFVQSVGTPAMQQHWTFGFHICRWGYKNVFDLVEVKENFKNFEIPVDTFWSDIDYMYEYRDFTVESNAFPKDKMMEFFNSLQQSNQHYVPIIDAAIYAANPINRSDDVYYPYYEGVRRDIFLRNPDRSLYVGNVWPGFTTFPDFTNPETTNYWTECLMNLSAAFGYNSSFPLPYSGLWIDMNEPTSFCIGSCGTDKLDQNPVHPAFILEGEPNNMVYMYPEGFEHTNASEHASAYQASVSQYYATATSTVESVKATSTPLNVRPKYNINYPPYALNTEQGEGDLSNLGVSVNATYHDGTVRYNLFNTYGYDQSRVTYDSLTSIEPNVRPFILSRSTFVGSGKYAAHWLGDNYSLWSNMIFSIPGALTFNMVGLPMVGADVCGFMGNTDEELCSRWMALGAFLPFYRNHNSLGSISQEPYRWESVAESSRCAMNIRYSLLPYWYTLMYEASSQGLPLIRPLFFEFPNEPSLANADRQFMVGSALLVTPVLEPNVDYVRGVFPGDNSTIWYDWYDHKVIYRQHNENITLSAPLTHINVAIRGGNIIPMQKPSLTTHETKQNPYDLLVALDSDRKACGSLYVDDGVSIQQESTLFVKFVANGDSLSIESYGDLQVHEPLSKITIIGLPCAPIGVYFEGVQVESFSYLEDTKELVLTNLEAFTSTGAFSNNWTISWNLPV.

The N-terminal stretch at 1–30 is a signal peptide; it reads MFIHRMKSNLASLFLSFFLLLACEFTFSYA. N-linked (GlcNAc...) asparagine glycans are attached at residues Asn-115, Asn-162, Asn-225, Asn-422, Asn-478, and Asn-486. Residue Glu-502 is part of the active site. 2 N-linked (GlcNAc...) asparagine glycosylation sites follow: Asn-546 and Asn-611. Residue Asp-669 is the Proton donor of the active site. Asn-670, Asn-823, Asn-843, and Asn-986 each carry an N-linked (GlcNAc...) asparagine glycan.

This sequence belongs to the glycosyl hydrolase 31 family.

It localises to the spore wall. This is an uncharacterized protein from Schizosaccharomyces pombe (strain 972 / ATCC 24843) (Fission yeast).